Reading from the N-terminus, the 80-residue chain is CLAVATA3/ESR (CLE)-related protein 40 (80 aa).

The signal sequence occupies residues 1–25 (MAAMKYKGSVFIILVILLLSSSLLA). Positions 45–80 (MKKEKKIDGGTANEVEERQVPTGSDPLHHKHIPFTP) are disordered. A Hydroxyproline modification is found at P65.

This sequence belongs to the CLV3/ESR signal peptide family. As to expression, mostly expressed at low levels in stems and apex, and, to a lower extent, in roots, seedlings, leaves, flowers, siliques and pollen.

It localises to the secreted. The protein resides in the extracellular space. Functionally, extracellular signal peptide secreted by differentiated root cells that regulates root cell fate. Acts with ACR4 as a ligand-receptor pair in a signal transduction pathway, coordinating movement of the root tip and organization of cell divisions in the root meristem. Promotes cell differentiation in the distal root meristem in a dose-dependent manner, especially the transition from columella stem cells (CSC) daughters into columella cells (CCs). Induces ACR4 expression in root quiescent center (QC). Involved in WUX5 QC-specific expression pattern regulation. Regulates the transition of protophloem cells from proliferation to differentiation, thus impinging on postembryonic growth capacity of the root meristem; this signaling pathway requires CRN and CLV2. The sequence is that of CLAVATA3/ESR (CLE)-related protein 40 from Arabidopsis thaliana (Mouse-ear cress).